The following is a 627-amino-acid chain: Zinc finger MYM-type protein 5 (627 aa).

The disordered stretch occupies residues 1-23; it reads MEAHLADMESSGGPTSSLAGTSR. Residues 12–23 show a composition bias toward polar residues; sequence GGPTSSLAGTSR. Residue Lys59 forms a Glycyl lysine isopeptide (Lys-Gly) (interchain with G-Cter in SUMO2) linkage. The interval 91-123 is disordered; that stretch reads DDEGDTDTNGGEEKNPTDFIEWGPNGNKSSTKN. Glycyl lysine isopeptide (Lys-Gly) (interchain with G-Cter in SUMO2) cross-links involve residues Lys137 and Lys195. An MYM-type 1 zinc finger spans residues 234 to 268; it reads HLFCSTTCLSSFSHKRTRKTRNVMCKKDSPVRTTT. The MYM-type 2; degenerate zinc-finger motif lies at 280-319; that stretch reads QGFYNASLSPYENCQSLRKEVFTKSRCIICNKLGEVRHEI. 2 MYM-type zinc fingers span residues 326-354 and 370-396; these read HKLCSNNCFNEYRLTNGLIMNCCEQCSKY and KRFCCQNCADEYKEIMEAKSKLLLLQN. A disordered region spans residues 405-429; the sequence is ENEKRLRESSGTLSGNTGDIPEKKE. Glycyl lysine isopeptide (Lys-Gly) (interchain with G-Cter in SUMO2) cross-links involve residues Lys408, Lys427, and Lys517.

Interacts (via N-terminal 120 amino acid region) with ETV5 (via C-terminal).

The protein localises to the nucleus. Functionally, functions as a transcriptional regulator. The protein is Zinc finger MYM-type protein 5 (Zmym5) of Mus musculus (Mouse).